Reading from the N-terminus, the 388-residue chain is Probable nitrate transporter NarT (388 aa).

12 helical membrane-spanning segments follow: residues 14–34, 45–65, 69–89, 98–118, 139–159, 161–181, 206–226, 242–262, 276–296, 297–317, 330–350, and 359–379; these read TLSL…MPMI, ISIV…PFGY, IIGA…PIFL, MLML…VGVT, GNLG…AIGW, STVR…FFLG, YYLS…GIFL, GIRA…GGII, FLFM…ILFT, VGCL…FKLV, GIVS…ITYV, and LAFI…WHLS.

This sequence belongs to the major facilitator superfamily. Nitrate/nitrite porter (TC 2.A.1.8) family.

It is found in the cell membrane. Its function is as follows. Probably required for nitrate uptake under anoxic conditions. Also possibly involved in excretion of nitrite produced by the dissimilatory reduction of nitrate. This Staphylococcus carnosus (strain TM300) protein is Probable nitrate transporter NarT (narT).